The chain runs to 322 residues: Adenine deaminase (322 aa).

Residues histidine 11, histidine 13, and histidine 189 each contribute to the Zn(2+) site. Residue glutamate 192 is the Proton donor of the active site. Residue aspartate 270 participates in Zn(2+) binding. Aspartate 271 is a substrate binding site.

This sequence belongs to the metallo-dependent hydrolases superfamily. Adenosine and AMP deaminases family. Adenine deaminase type 2 subfamily. It depends on Zn(2+) as a cofactor.

It catalyses the reaction adenine + H2O + H(+) = hypoxanthine + NH4(+). In terms of biological role, catalyzes the hydrolytic deamination of adenine to hypoxanthine. Plays an important role in the purine salvage pathway and in nitrogen catabolism. This chain is Adenine deaminase, found in Rhizobium rhizogenes (strain K84 / ATCC BAA-868) (Agrobacterium radiobacter).